The following is a 350-amino-acid chain: MSTTPLSISRAKKYKTVFKGAAILTTFAALYIVTSPSTGKRLVKNASIKGLYNVSGNDCFLNCVLQSLASQESLLEILKLRCSSSTLYATLYELLQKLNSGPGNPITPGSFLNSLEIATNKKLVRSIQQDAQEFLQHLVETLELQKPHTYKWSKVLSFPVDSPFIGTMEQKVQCCQCLAISISYSTATSIQLCLPPEYSGNSNVSLLSLMEADREQHISDYKCDSCFKSSPKHSKTSCIRTVDWKNPPTILQIQLERTSYTCQGLTRNNVSISFPSKLILKNKHHYILRSLITHSGSVTYGHYLCYRLQDDIWWKANDSLITKSSLNEALSQTRSACLLFYEMESPLALD.

Positions 49 to 344 (KGLYNVSGND…SACLLFYEME (296 aa)) constitute a USP domain. The active-site Nucleophile is the cysteine 59. The active-site Proton acceptor is histidine 302.

Belongs to the peptidase C19 family.

The enzyme catalyses Thiol-dependent hydrolysis of ester, thioester, amide, peptide and isopeptide bonds formed by the C-terminal Gly of ubiquitin (a 76-residue protein attached to proteins as an intracellular targeting signal).. This Schizosaccharomyces pombe (strain 972 / ATCC 24843) (Fission yeast) protein is Ubiquitin carboxyl-terminal hydrolase 11 (ubp11).